The sequence spans 649 residues: Centrosomal protein of 63 kDa-A (649 aa).

Coiled coils occupy residues 19–185 (DSCE…YQHQ) and 222–556 (EEEL…DAAS). Ser-560 carries the post-translational modification Phosphoserine; by atm and atr. A coiled-coil region spans residues 612–645 (FLQEEEQRSHELLQRLNAHIEELKQESQRTVEHF).

This sequence belongs to the CEP63 family. Phosphorylation at Ser-560 by atm and atr promotes its delocalization from the centrosome and impairs its ability to promote centrosome dependent spindle assembly.

It localises to the cytoplasm. The protein resides in the cytoskeleton. It is found in the microtubule organizing center. The protein localises to the centrosome. Its subcellular location is the centriole. Required for normal spindle assembly. Plays a key role in mother-centriole-dependent centriole duplication. Plays a role in DNA damage response. Following DNA damage, such as double-strand breaks (DSBs), is removed from centrosomes; this leads to the inactivation of spindle assembly and delay in mitotic progression. In Xenopus laevis (African clawed frog), this protein is Centrosomal protein of 63 kDa-A (cep63-a).